The following is a 361-amino-acid chain: Inhibin alpha chain (361 aa).

The first 21 residues, 1–21 (MLPLLLPLQLLLLMVMKGGHG), serve as a signal peptide directing secretion. Residues 22–64 (CQGPELDRELVLAKVRALVLDALGPPNASKDGGKPVAQRLTRR) constitute a propeptide that is removed on maturation. The tract at residues 45–82 (GPPNASKDGGKPVAQRLTRRHAHTGGSTRRSMENEDED) is disordered. Residues N48, N144, and N266 are each glycosylated (N-linked (GlcNAc...) asparagine). A propeptide spans 65 to 230 (HAHTGGSTRR…PPSVGERARR (166 aa)) (inhibin alpha N-terminal region). 3 disulfides stabilise this stretch: C260/C323, C289/C358, and C293/C360.

This sequence belongs to the TGF-beta family. Dimeric, linked by one or more disulfide bonds. Activin B is a dimer of alpha and beta-B. Inhibin A is a dimer of alpha and beta-A. Inhibin B is a dimer of alpha and beta-B. Interacts with TGFBR3L; this interaction regulates female fertility. Proteolytic processing yields a number of bioactive forms, consisting either solely of the mature alpha chain, of the most N-terminal propeptide linked through a disulfide bond to the mature alpha chain, or of the entire proprotein.

It localises to the secreted. In terms of biological role, inhibins and activins inhibit and activate, respectively, the secretion of follitropin by the pituitary gland. Inhibins/activins are involved in regulating a number of diverse functions such as hypothalamic and pituitary hormone secretion, gonadal hormone secretion, germ cell development and maturation, erythroid differentiation, insulin secretion, nerve cell survival, embryonic axial development or bone growth, depending on their subunit composition. Inhibins appear to oppose the functions of activins. Functionally, inhibin A is a dimer of alpha/INHA and beta-A/INHBA that functions as a feedback regulator in the hypothalamic-pituitary-gonadal (HPG) axis. Inhibits the secretion of FSH from the anterior pituitary gland by acting on pituitary gonadotrope cells. Antagonizes activin A by binding to the proteoglycan, betaglycan, and forming a stable complex with and, thereby, sequestering type II activin receptors while excluding type I receptor. Inhibin B is a dimer of alpha and beta-B that plays a crucial role in the regulation of the reproductive system by inhibiting the secretion of follicle-stimulating hormone (FSH) from the anterior pituitary gland. Thereby, maintains reproductive homeostasis in both males and females. Acts as a more potent suppressor of FSH release than inhibin A. Functions as competitive receptor antagonist binding activin type II receptors with high affinity in the presence of the TGF-beta type III coreceptor/TGFBR3L. The polypeptide is Inhibin alpha chain (INHA) (Trichosurus vulpecula (Brush-tailed possum)).